The following is a 206-amino-acid chain: uncharacterized protein (206 aa).

Disordered regions lie at residues 38-88 (RLQQ…NKNA) and 160-206 (HQNT…SVQE). Positions 40–73 (QQQQQQQQQQQQNRTASSLQQPQQQQPISPPLFL) are enriched in low complexity. A Phosphoserine modification is found at Ser-68. The span at 78–88 (TSENSNLNKNA) shows a compositional bias: polar residues. The span at 165–186 (SSSNPGSMSSSPPNSASSIFNS) shows a compositional bias: low complexity. Over residues 192 to 206 (PYTSQSFNPLESVQE) the composition is skewed to polar residues.

It localises to the cytoplasm. This is an uncharacterized protein from Saccharomyces cerevisiae (strain ATCC 204508 / S288c) (Baker's yeast).